The primary structure comprises 188 residues: GTP cyclohydrolase 1 (188 aa).

Zn(2+)-binding residues include Cys78, His81, and Cys150.

Belongs to the GTP cyclohydrolase I family. As to quaternary structure, toroid-shaped homodecamer, composed of two pentamers of five dimers.

The enzyme catalyses GTP + H2O = 7,8-dihydroneopterin 3'-triphosphate + formate + H(+). The protein operates within cofactor biosynthesis; 7,8-dihydroneopterin triphosphate biosynthesis; 7,8-dihydroneopterin triphosphate from GTP: step 1/1. This chain is GTP cyclohydrolase 1, found in Halalkalibacterium halodurans (strain ATCC BAA-125 / DSM 18197 / FERM 7344 / JCM 9153 / C-125) (Bacillus halodurans).